The sequence spans 197 residues: Crossover junction endodeoxyribonuclease RuvC (197 aa).

Active-site residues include aspartate 7, glutamate 68, and aspartate 141. Mg(2+) is bound by residues aspartate 7, glutamate 68, and aspartate 141. Composition is skewed to low complexity over residues alanine 165–arginine 181 and alanine 188–serine 197. Residues alanine 165–serine 197 form a disordered region.

It belongs to the RuvC family. As to quaternary structure, homodimer which binds Holliday junction (HJ) DNA. The HJ becomes 2-fold symmetrical on binding to RuvC with unstacked arms; it has a different conformation from HJ DNA in complex with RuvA. In the full resolvosome a probable DNA-RuvA(4)-RuvB(12)-RuvC(2) complex forms which resolves the HJ. Requires Mg(2+) as cofactor.

Its subcellular location is the cytoplasm. The enzyme catalyses Endonucleolytic cleavage at a junction such as a reciprocal single-stranded crossover between two homologous DNA duplexes (Holliday junction).. The RuvA-RuvB-RuvC complex processes Holliday junction (HJ) DNA during genetic recombination and DNA repair. Endonuclease that resolves HJ intermediates. Cleaves cruciform DNA by making single-stranded nicks across the HJ at symmetrical positions within the homologous arms, yielding a 5'-phosphate and a 3'-hydroxyl group; requires a central core of homology in the junction. The consensus cleavage sequence is 5'-(A/T)TT(C/G)-3'. Cleavage occurs on the 3'-side of the TT dinucleotide at the point of strand exchange. HJ branch migration catalyzed by RuvA-RuvB allows RuvC to scan DNA until it finds its consensus sequence, where it cleaves and resolves the cruciform DNA. In Frankia alni (strain DSM 45986 / CECT 9034 / ACN14a), this protein is Crossover junction endodeoxyribonuclease RuvC.